Here is a 254-residue protein sequence, read N- to C-terminus: 4-hydroxy-tetrahydrodipicolinate reductase (254 aa).

Residues 8–13 (GCSGKM), D35, 86–88 (CST), and 110–113 (SANM) contribute to the NAD(+) site. The active-site Proton donor/acceptor is H143. H144 serves as a coordination point for (S)-2,3,4,5-tetrahydrodipicolinate. The active-site Proton donor is the K147. Residue 153-154 (GT) participates in (S)-2,3,4,5-tetrahydrodipicolinate binding.

It belongs to the DapB family.

The protein resides in the cytoplasm. The enzyme catalyses (S)-2,3,4,5-tetrahydrodipicolinate + NAD(+) + H2O = (2S,4S)-4-hydroxy-2,3,4,5-tetrahydrodipicolinate + NADH + H(+). It carries out the reaction (S)-2,3,4,5-tetrahydrodipicolinate + NADP(+) + H2O = (2S,4S)-4-hydroxy-2,3,4,5-tetrahydrodipicolinate + NADPH + H(+). It participates in amino-acid biosynthesis; L-lysine biosynthesis via DAP pathway; (S)-tetrahydrodipicolinate from L-aspartate: step 4/4. Its function is as follows. Catalyzes the conversion of 4-hydroxy-tetrahydrodipicolinate (HTPA) to tetrahydrodipicolinate. The protein is 4-hydroxy-tetrahydrodipicolinate reductase of Clostridium perfringens (strain SM101 / Type A).